A 569-amino-acid polypeptide reads, in one-letter code: Membrane protein insertase YidC (569 aa).

Residues 6–26 (FVLFLIFATSLLFLWDAWQKE) traverse the membrane as a helical segment. Polar residues-rich tracts occupy residues 32-52 (QGPK…TAGT) and 62-74 (LASS…STAE). The interval 32–81 (QGPKTAVQGTETQANTGTAGTAETPVPGDQLASSVPQRGSTAENGAPVRA) is disordered. 5 consecutive transmembrane segments (helical) span residues 348-368 (VVDY…LSLF), 375-395 (WGVA…PLSA), 442-462 (GGCL…WVLL), 479-499 (LSAP…MFLQ), and 519-539 (PLAF…YSLV).

Belongs to the OXA1/ALB3/YidC family. Type 1 subfamily. Interacts with the Sec translocase complex via SecD. Specifically interacts with transmembrane segments of nascent integral membrane proteins during membrane integration.

The protein localises to the cell inner membrane. Functionally, required for the insertion and/or proper folding and/or complex formation of integral membrane proteins into the membrane. Involved in integration of membrane proteins that insert both dependently and independently of the Sec translocase complex, as well as at least some lipoproteins. Aids folding of multispanning membrane proteins. This is Membrane protein insertase YidC from Nitrosospira multiformis (strain ATCC 25196 / NCIMB 11849 / C 71).